Here is a 442-residue protein sequence, read N- to C-terminus: MKGAMEPEPEVLLQEARENVEAAQSYRRELGQRLQGLREAQRQIKESASQTRDVLKQHFSDLKGTLGKLLDERLVTLLQEVDTIEQETIKPLDDCQKLIEHGVNTADDLVREGEIAILGGIEEESDKLWNFTKKASHIQLDSLPEVPLLVDVPCLSAQLDDSILNIVKDHIFKHGTVASRPPVQIEELIEKPGGIIVRWCKVDDDFTAQDYRLQFRKCTANHFEDVYVGSETEFIVLHIDPNVDYQFRVCARGDGRQEWSPWSVPQTGHSTLVPHEWTTGFEGYSLSSRRNIALRNDAESSGVLYSSAPTYFCGQTLTFRVETVGQPDRRDSIGVCAERQNGYESLQRDQAVCISTNGAVFVNGKEMTNQLPAVTSGSTVTFDIEAVTLGTSNSHEGGNAKLRVTISSNNREVVFDWLLEQACGPLYFGCSFFYPGWKVLVF.

The stretch at Glu-10–Glu-46 forms a coiled coil. A Fibronectin type-III domain is found at Pro-181–Pro-274.

The protein belongs to the cytokine receptor-like factor 3 family.

The protein resides in the cytoplasm. May play a role in the negative regulation of cell cycle progression. This is Cytokine receptor-like factor 3 (Crlf3) from Mus musculus (Mouse).